The following is a 120-amino-acid chain: uncharacterized protein (120 aa).

2 N-linked (GlcNAc...) asparagine; by host glycosylation sites follow: asparagine 29 and asparagine 68. A helical membrane pass occupies residues 74–94; the sequence is IFNGLGFILIVIFIYLLIITL.

The protein belongs to the asfivirus B117L family.

Its subcellular location is the host membrane. It localises to the virion. This is an uncharacterized protein from Ornithodoros (relapsing fever ticks).